The chain runs to 370 residues: 3-dehydroquinate synthase (370 aa).

NAD(+) contacts are provided by residues 108–112, 132–133, lysine 145, and lysine 154; these read GVVGD and TT. Residues glutamate 187, histidine 250, and histidine 268 each coordinate Zn(2+).

Belongs to the sugar phosphate cyclases superfamily. Dehydroquinate synthase family. Co(2+) serves as cofactor. The cofactor is Zn(2+). NAD(+) is required as a cofactor.

It localises to the cytoplasm. The catalysed reaction is 7-phospho-2-dehydro-3-deoxy-D-arabino-heptonate = 3-dehydroquinate + phosphate. Its pathway is metabolic intermediate biosynthesis; chorismate biosynthesis; chorismate from D-erythrose 4-phosphate and phosphoenolpyruvate: step 2/7. Its function is as follows. Catalyzes the conversion of 3-deoxy-D-arabino-heptulosonate 7-phosphate (DAHP) to dehydroquinate (DHQ). The protein is 3-dehydroquinate synthase of Caulobacter vibrioides (strain NA1000 / CB15N) (Caulobacter crescentus).